Here is a 221-residue protein sequence, read N- to C-terminus: MTGVGSAVRRLYLSVYNWAVFFGWAQVLYYAVTTLLESGHEAVYAAVERPLQFAQTAAFLEILHGLVGLVRSPVSATLPQIGSRLFLTWGILWSFPETHSHILVTSLVISWSITEIIRYSFFGMKETFGFAPSWLLWLRYSTFMVLYPTGISSEVGLIYIALPYMKATEKYCLRMPNKWNFSFDFSYASILSLAVYVPGSPHMFTYMLAQRKKALAKAKAA.

Residues 1–11 (MTGVGSAVRRL) lie on the Cytoplasmic side of the membrane. A helical membrane pass occupies residues 12 to 32 (YLSVYNWAVFFGWAQVLYYAV). Over 33 to 51 (TTLLESGHEAVYAAVERPL) the chain is Lumenal. A helical membrane pass occupies residues 52-70 (QFAQTAAFLEILHGLVGLV). Topologically, residues 71–76 (RSPVSA) are cytoplasmic. The helical transmembrane segment at 77 to 95 (TLPQIGSRLFLTWGILWSF) threads the bilayer. At 96-100 (PETHS) the chain is on the lumenal side. Residues 101–121 (HILVTSLVISWSITEIIRYSF) traverse the membrane as a helical segment. Topologically, residues 122–141 (FGMKETFGFAPSWLLWLRYS) are cytoplasmic. A helical transmembrane segment spans residues 142–165 (TFMVLYPTGISSEVGLIYIALPYM). Catalysis depends on residues Tyr147 and Glu154. Residues 166-184 (KATEKYCLRMPNKWNFSFD) are Lumenal-facing. Residues 185–209 (FSYASILSLAVYVPGSPHMFTYMLA) form a helical membrane-spanning segment. Residues 210 to 221 (QRKKALAKAKAA) lie on the Cytoplasmic side of the membrane.

This sequence belongs to the very long-chain fatty acids dehydratase HACD family.

The protein resides in the endoplasmic reticulum membrane. It carries out the reaction a very-long-chain (3R)-3-hydroxyacyl-CoA = a very-long-chain (2E)-enoyl-CoA + H2O. It functions in the pathway lipid metabolism; fatty acid biosynthesis. Catalyzes the third of the four reactions of the long-chain fatty acids elongation cycle. This endoplasmic reticulum-bound enzymatic process, allows the addition of two carbons to the chain of long- and very long-chain fatty acids/VLCFAs per cycle. This enzyme catalyzes the dehydration of the 3-hydroxyacyl-CoA intermediate into trans-2,3-enoyl-CoA, within each cycle of fatty acid elongation. Thereby, it participates in the production of VLCFAs of different chain lengths that are involved in multiple biological processes as precursors of membrane lipids and lipid mediators. May be an anti-phosphatase that prevents CDKA-1 dephosphorylation and activation. Involved in the hormonal control of cell division and differentiation. Required for proliferation control of meristematic and non-meristematic cells. Negative regulator of the cell cycle. In Oryza sativa subsp. japonica (Rice), this protein is Very-long-chain (3R)-3-hydroxyacyl-CoA dehydratase PASTICCINO 2B (PAS2B).